A 360-amino-acid polypeptide reads, in one-letter code: Photosystem II protein D1 (360 aa).

The next 3 membrane-spanning stretches (helical) occupy residues 29 to 46 (YIGWFGVLMIPTLVSAIA), 118 to 133 (HFLIGVACYLGREWEL), and 142 to 156 (WICVAFSAPVAAATA). H118 provides a ligand contact to chlorophyll a. Y126 provides a ligand contact to pheophytin a. [CaMn4O5] cluster-binding residues include D170 and E189. The chain crosses the membrane as a helical span at residues 197-218 (FHMLGVAGVFGGSLFSAMHGSL). Position 198 (H198) interacts with chlorophyll a. A quinone contacts are provided by residues H215 and 264–265 (SF). H215 contacts Fe cation. H272 contacts Fe cation. Residues 274 to 288 (FLAAWPVIGIWFTAL) traverse the membrane as a helical segment. Residues H332, E333, D342, and A344 each contribute to the [CaMn4O5] cluster site. Positions 345–360 (AGDVAPVALTAPPING) are excised as a propeptide.

This sequence belongs to the reaction center PufL/M/PsbA/D family. PSII is composed of 1 copy each of membrane proteins PsbA, PsbB, PsbC, PsbD, PsbE, PsbF, PsbH, PsbI, PsbJ, PsbK, PsbL, PsbM, PsbT, PsbX, PsbY, PsbZ, Psb30/Ycf12, peripheral proteins PsbO, CyanoQ (PsbQ), PsbU, PsbV and a large number of cofactors. It forms dimeric complexes. The cofactor is The D1/D2 heterodimer binds P680, chlorophylls that are the primary electron donor of PSII, and subsequent electron acceptors. It shares a non-heme iron and each subunit binds pheophytin, quinone, additional chlorophylls, carotenoids and lipids. D1 provides most of the ligands for the Mn4-Ca-O5 cluster of the oxygen-evolving complex (OEC). There is also a Cl(-1) ion associated with D1 and D2, which is required for oxygen evolution. The PSII complex binds additional chlorophylls, carotenoids and specific lipids.. In terms of processing, tyr-161 forms a radical intermediate that is referred to as redox-active TyrZ, YZ or Y-Z. C-terminally processed by CtpA; processing is essential to allow assembly of the oxygen-evolving complex and thus photosynthetic growth.

The protein localises to the cellular thylakoid membrane. It catalyses the reaction 2 a plastoquinone + 4 hnu + 2 H2O = 2 a plastoquinol + O2. Its function is as follows. Photosystem II (PSII) is a light-driven water:plastoquinone oxidoreductase that uses light energy to abstract electrons from H(2)O, generating O(2) and a proton gradient subsequently used for ATP formation. It consists of a core antenna complex that captures photons, and an electron transfer chain that converts photonic excitation into a charge separation. The D1/D2 (PsbA/PsbD) reaction center heterodimer binds P680, the primary electron donor of PSII as well as several subsequent electron acceptors. The chain is Photosystem II protein D1 from Trichormus azollae (Anabaena azollae).